A 953-amino-acid chain; its full sequence is Protein translocase subunit SecA (953 aa).

ATP contacts are provided by residues Q84, 102–106 (GEGKT), and D491. A disordered region spans residues 832 to 953 (EPEPAPEQPS…RAEAKKNKRR (122 aa)). Over residues 841–865 (SVPVSVSRSAEPTPDLQAAAEAAAA) the composition is skewed to low complexity. Positions 898 to 907 (KGLDAPEKQR) are enriched in basic and acidic residues. The span at 908–934 (LNYSGPTEQGGVQTTSESAGEQGNGTS) shows a compositional bias: polar residues. Positions 940-953 (RAAARAEAKKNKRR) are enriched in basic and acidic residues.

Belongs to the SecA family. As to quaternary structure, monomer and homodimer. Part of the essential Sec protein translocation apparatus which comprises SecA, SecYEG and auxiliary proteins SecDF. Other proteins may also be involved.

Its subcellular location is the cell membrane. It is found in the cytoplasm. The enzyme catalyses ATP + H2O + cellular proteinSide 1 = ADP + phosphate + cellular proteinSide 2.. Functionally, part of the Sec protein translocase complex. Interacts with the SecYEG preprotein conducting channel. Has a central role in coupling the hydrolysis of ATP to the transfer of proteins into and across the cell membrane, serving as an ATP-driven molecular motor driving the stepwise translocation of polypeptide chains across the membrane. The polypeptide is Protein translocase subunit SecA (Saccharopolyspora erythraea (strain ATCC 11635 / DSM 40517 / JCM 4748 / NBRC 13426 / NCIMB 8594 / NRRL 2338)).